The sequence spans 297 residues: Bifunctional protein FolD 2 (297 aa).

NADP(+) is bound by residues 164–166, Ser193, and Ile234; that span reads GRS.

It belongs to the tetrahydrofolate dehydrogenase/cyclohydrolase family. As to quaternary structure, homodimer.

The enzyme catalyses (6R)-5,10-methylene-5,6,7,8-tetrahydrofolate + NADP(+) = (6R)-5,10-methenyltetrahydrofolate + NADPH. It catalyses the reaction (6R)-5,10-methenyltetrahydrofolate + H2O = (6R)-10-formyltetrahydrofolate + H(+). The protein operates within one-carbon metabolism; tetrahydrofolate interconversion. Catalyzes the oxidation of 5,10-methylenetetrahydrofolate to 5,10-methenyltetrahydrofolate and then the hydrolysis of 5,10-methenyltetrahydrofolate to 10-formyltetrahydrofolate. This chain is Bifunctional protein FolD 2, found in Haloarcula marismortui (strain ATCC 43049 / DSM 3752 / JCM 8966 / VKM B-1809) (Halobacterium marismortui).